A 453-amino-acid chain; its full sequence is Kynureninase (453 aa).

Pyridoxal 5'-phosphate contacts are provided by residues Leu-111, Thr-112, 139 to 142 (FPSD), Ser-196, Asp-226, His-229, and Tyr-251. An N6-(pyridoxal phosphate)lysine modification is found at Lys-252. Pyridoxal 5'-phosphate-binding residues include Trp-286 and Asn-314.

It belongs to the kynureninase family. As to quaternary structure, homodimer. It depends on pyridoxal 5'-phosphate as a cofactor.

Its subcellular location is the cytoplasm. The protein resides in the nucleus. It carries out the reaction L-kynurenine + H2O = anthranilate + L-alanine + H(+). It catalyses the reaction 3-hydroxy-L-kynurenine + H2O = 3-hydroxyanthranilate + L-alanine + H(+). Its pathway is amino-acid degradation; L-kynurenine degradation; L-alanine and anthranilate from L-kynurenine: step 1/1. It functions in the pathway cofactor biosynthesis; NAD(+) biosynthesis; quinolinate from L-kynurenine: step 2/3. Its function is as follows. Catalyzes the cleavage of L-kynurenine (L-Kyn) and L-3-hydroxykynurenine (L-3OHKyn) into anthranilic acid (AA) and 3-hydroxyanthranilic acid (3-OHAA), respectively. This Saccharomyces cerevisiae (strain ATCC 204508 / S288c) (Baker's yeast) protein is Kynureninase.